Here is an 88-residue protein sequence, read N- to C-terminus: Putative regulatory protein DvMF_1139 (88 aa).

The protein belongs to the RemA family.

The chain is Putative regulatory protein DvMF_1139 from Nitratidesulfovibrio vulgaris (strain DSM 19637 / Miyazaki F) (Desulfovibrio vulgaris).